The chain runs to 309 residues: MELEFLGTCSGQPSKLRNVSSLALKLLDELNEIWLFDCGEATQHQILRTNIRLRKITKIFISHNHGDHIFGLPGLLSTRSFQGDVGPLTIYGPAGIEQFVKTSLRISKTKISYPIKFVTLEEGGKIVSERGFEVYTEKLDHRIDSWGFRMVEADKAGELLMDKLAEFKVPNGPLLGKLKRGEQVELADGTVLNGKDFLGPAKKGRVVTVIYDTRSTPSIRRLADHADVLVHEATFDASEGKLARDYYHSTCTQAAETASACHVGHLYLTHVSARYVGSLASQMVKQAREIFPATTLAKDLDKFVVPMKG.

Zn(2+) contacts are provided by His-63, His-65, Asp-67, His-68, His-141, Asp-212, and His-270. Residue Asp-67 is the Proton acceptor of the active site.

It belongs to the RNase Z family. Homodimer. Zn(2+) serves as cofactor.

The catalysed reaction is Endonucleolytic cleavage of RNA, removing extra 3' nucleotides from tRNA precursor, generating 3' termini of tRNAs. A 3'-hydroxy group is left at the tRNA terminus and a 5'-phosphoryl group is left at the trailer molecule.. Its function is as follows. Zinc phosphodiesterase, which displays some tRNA 3'-processing endonuclease activity. Probably involved in tRNA maturation, by removing a 3'-trailer from precursor tRNA. This is Ribonuclease Z from Lactobacillus delbrueckii subsp. bulgaricus (strain ATCC 11842 / DSM 20081 / BCRC 10696 / JCM 1002 / NBRC 13953 / NCIMB 11778 / NCTC 12712 / WDCM 00102 / Lb 14).